We begin with the raw amino-acid sequence, 87 residues long: Large ribosomal subunit protein eL33 (87 aa).

The protein belongs to the eukaryotic ribosomal protein eL33 family.

This Pyrococcus woesei protein is Large ribosomal subunit protein eL33.